A 541-amino-acid polypeptide reads, in one-letter code: Arginine--tRNA ligase (541 aa).

The 'HIGH' region signature appears at 119–129; it reads ANPTGPLHIGH.

The protein belongs to the class-I aminoacyl-tRNA synthetase family. Monomer.

It is found in the cytoplasm. The enzyme catalyses tRNA(Arg) + L-arginine + ATP = L-arginyl-tRNA(Arg) + AMP + diphosphate. The chain is Arginine--tRNA ligase from Helicobacter pylori (strain P12).